The chain runs to 298 residues: Cyclin-dependent kinase 2 (298 aa).

Positions Phe4–Phe286 constitute a Protein kinase domain. Residues Ile10–Val18, Lys33, Glu81–Leu83, and Asp86 contribute to the ATP site. Thr14 is subject to Phosphothreonine. Phosphotyrosine is present on Tyr15. Asp127 (proton acceptor) is an active-site residue. ATP-binding positions include Lys129–Asn132 and Asp145. Thr160 bears the Phosphothreonine; by CAK mark.

The protein belongs to the protein kinase superfamily. CMGC Ser/Thr protein kinase family. CDC2/CDKX subfamily.

It carries out the reaction L-seryl-[protein] + ATP = O-phospho-L-seryl-[protein] + ADP + H(+). It catalyses the reaction L-threonyl-[protein] + ATP = O-phospho-L-threonyl-[protein] + ADP + H(+). Its activity is regulated as follows. Phosphorylation at Thr-14 or Tyr-15 inactivates the enzyme, while phosphorylation at Thr-160 activates it. Its function is as follows. Serine/threonine-protein kinase involved in the control of the cell cycle; essential for meiosis, but dispensable for mitosis. Triggers duplication of centrosomes and DNA. Acts at the G1-S transition to promote the E2F transcriptional program and the initiation of DNA synthesis, and modulates G2 progression; controls the timing of entry into mitosis/meiosis by controlling the subsequent activation of cyclin B/CDK1 by phosphorylation, and coordinates the activation of cyclin B/CDK1 at the centrosome and in the nucleus. Crucial role in orchestrating a fine balance between cellular proliferation, cell death, and DNA repair in embryonic stem cells (ESCs). Activity of CDK2 is maximal during S phase and G2; activated by interaction with cyclin E during the early stages of DNA synthesis to permit G1-S transition, and subsequently activated by cyclin A2 (cyclin A1 in germ cells) during the late stages of DNA replication to drive the transition from S phase to mitosis, the G2 phase. The protein is Cyclin-dependent kinase 2 (cdk2) of Carassius auratus (Goldfish).